A 31-amino-acid chain; its full sequence is Cytochrome b6-f complex subunit 6 (31 aa).

The helical transmembrane segment at 3–23 threads the bilayer; sequence AIVAYIGFLALFTGIAAGLLF.

The protein belongs to the PetL family. As to quaternary structure, the 4 large subunits of the cytochrome b6-f complex are cytochrome b6, subunit IV (17 kDa polypeptide, PetD), cytochrome f and the Rieske protein, while the 4 small subunits are PetG, PetL, PetM and PetN. The complex functions as a dimer.

The protein localises to the cellular thylakoid membrane. Its function is as follows. Component of the cytochrome b6-f complex, which mediates electron transfer between photosystem II (PSII) and photosystem I (PSI), cyclic electron flow around PSI, and state transitions. PetL is important for photoautotrophic growth as well as for electron transfer efficiency and stability of the cytochrome b6-f complex. This Nostoc sp. (strain PCC 7120 / SAG 25.82 / UTEX 2576) protein is Cytochrome b6-f complex subunit 6.